A 68-amino-acid polypeptide reads, in one-letter code: ATP synthase subunit K, mitochondrial (68 aa).

Residues 15-31 traverse the membrane as a helical segment; the sequence is HQLAIGTLGLLGLLVVP.

Belongs to the ATP19 family. In terms of assembly, F-type ATPases have 2 components, CF(1) - the catalytic core - and CF(0) - the membrane proton channel. In yeast, the dimeric form of ATP synthase consists of 17 polypeptides: alpha, beta, gamma, delta, epsilon, 4 (B), 5 (OSCP), 6 (A), 8, 9 (C), d, E (Tim11), f, g, h, i/j and k.

Its subcellular location is the mitochondrion inner membrane. In terms of biological role, mitochondrial membrane ATP synthase (F(1)F(0) ATP synthase or Complex V) produces ATP from ADP in the presence of a proton gradient across the membrane which is generated by electron transport complexes of the respiratory chain. F-type ATPases consist of two structural domains, F(1) - containing the extramembraneous catalytic core and F(0) - containing the membrane proton channel, linked together by a central stalk and a peripheral stalk. During catalysis, ATP synthesis in the catalytic domain of F(1) is coupled via a rotary mechanism of the central stalk subunits to proton translocation. Part of the complex F(0) domain. Minor subunit located with subunit a in the membrane. The K chain binds the dimeric form by interacting with the G and E chains. The sequence is that of ATP synthase subunit K, mitochondrial (ATP19) from Saccharomyces cerevisiae (strain ATCC 204508 / S288c) (Baker's yeast).